We begin with the raw amino-acid sequence, 186 residues long: Ribosome-recycling factor (186 aa).

The interval aspartate 135–methionine 164 is disordered.

The protein belongs to the RRF family.

It is found in the cytoplasm. Its function is as follows. Responsible for the release of ribosomes from messenger RNA at the termination of protein biosynthesis. May increase the efficiency of translation by recycling ribosomes from one round of translation to another. This chain is Ribosome-recycling factor, found in Sinorhizobium medicae (strain WSM419) (Ensifer medicae).